A 205-amino-acid polypeptide reads, in one-letter code: Small ribosomal subunit protein uS4 (205 aa).

A disordered region spans residues 1 to 49 (MSKRQSAKYKLDRRMGENIWGRPKSPVNRREYGPGQHGQRRKGKLSDFG). Positions 94-157 (SRLDAIVFRA…KQLTVVLESV (64 aa)) constitute an S4 RNA-binding domain.

This sequence belongs to the universal ribosomal protein uS4 family. Part of the 30S ribosomal subunit. Contacts protein S5. The interaction surface between S4 and S5 is involved in control of translational fidelity.

In terms of biological role, one of the primary rRNA binding proteins, it binds directly to 16S rRNA where it nucleates assembly of the body of the 30S subunit. Its function is as follows. With S5 and S12 plays an important role in translational accuracy. The sequence is that of Small ribosomal subunit protein uS4 from Chelativorans sp. (strain BNC1).